The sequence spans 122 residues: S-adenosylmethionine decarboxylase proenzyme (122 aa).

S69 acts as the Schiff-base intermediate with substrate; via pyruvic acid in catalysis. S69 is modified (pyruvic acid (Ser); by autocatalysis). H74 functions as the Proton acceptor; for processing activity in the catalytic mechanism. C89 acts as the Proton donor; for catalytic activity in catalysis.

It belongs to the prokaryotic AdoMetDC family. Type 1 subfamily. Heterotetramer of two alpha and two beta chains arranged as a dimer of alpha/beta heterodimers. Pyruvate serves as cofactor. Post-translationally, is synthesized initially as an inactive proenzyme. Formation of the active enzyme involves a self-maturation process in which the active site pyruvoyl group is generated from an internal serine residue via an autocatalytic post-translational modification. Two non-identical subunits are generated from the proenzyme in this reaction, and the pyruvate is formed at the N-terminus of the alpha chain, which is derived from the carboxyl end of the proenzyme. The post-translation cleavage follows an unusual pathway, termed non-hydrolytic serinolysis, in which the side chain hydroxyl group of the serine supplies its oxygen atom to form the C-terminus of the beta chain, while the remainder of the serine residue undergoes an oxidative deamination to produce ammonia and the pyruvoyl group blocking the N-terminus of the alpha chain.

It catalyses the reaction S-adenosyl-L-methionine + H(+) = S-adenosyl 3-(methylsulfanyl)propylamine + CO2. It participates in amine and polyamine biosynthesis; S-adenosylmethioninamine biosynthesis; S-adenosylmethioninamine from S-adenosyl-L-methionine: step 1/1. Its function is as follows. Catalyzes the decarboxylation of S-adenosylmethionine to S-adenosylmethioninamine (dcAdoMet), the propylamine donor required for the synthesis of the polyamines spermine and spermidine from the diamine putrescine. The chain is S-adenosylmethionine decarboxylase proenzyme from Sulfolobus acidocaldarius (strain ATCC 33909 / DSM 639 / JCM 8929 / NBRC 15157 / NCIMB 11770).